The following is a 396-amino-acid chain: Tryptophan synthase beta chain (396 aa).

An N6-(pyridoxal phosphate)lysine modification is found at K88.

Belongs to the TrpB family. As to quaternary structure, tetramer of two alpha and two beta chains. Pyridoxal 5'-phosphate serves as cofactor.

The catalysed reaction is (1S,2R)-1-C-(indol-3-yl)glycerol 3-phosphate + L-serine = D-glyceraldehyde 3-phosphate + L-tryptophan + H2O. The protein operates within amino-acid biosynthesis; L-tryptophan biosynthesis; L-tryptophan from chorismate: step 5/5. Its function is as follows. The beta subunit is responsible for the synthesis of L-tryptophan from indole and L-serine. This is Tryptophan synthase beta chain from Actinobacillus pleuropneumoniae serotype 5b (strain L20).